The chain runs to 186 residues: UPF0397 protein SGO_0469 (186 aa).

Transmembrane regions (helical) follow at residues 14-34 (VVAT…SIPT), 50-70 (LFGV…GHAL), 77-97 (GNPW…VGLL), 119-139 (AQFV…DILI), and 152-172 (VVAT…LLIA).

This sequence belongs to the UPF0397 family.

It is found in the cell membrane. This chain is UPF0397 protein SGO_0469, found in Streptococcus gordonii (strain Challis / ATCC 35105 / BCRC 15272 / CH1 / DL1 / V288).